We begin with the raw amino-acid sequence, 412 residues long: Alpha-ketoglutarate-dependent sulfonate dioxygenase (412 aa).

Residue Ser52 is modified to Phosphoserine. Positions 218 and 220 each coordinate Fe cation. Residues Thr245 and Trp352 each coordinate 2-oxoglutarate. His367 provides a ligand contact to Fe cation. The 2-oxoglutarate site is built by Arg379 and Arg383.

The protein belongs to the TfdA dioxygenase family. Requires Fe(2+) as cofactor.

Its pathway is organosulfur degradation; alkanesulfonate degradation. Its function is as follows. Acts as an alpha-ketoglutarate-dependent dioxygenase active on sulfonates. Although taurine is a poor substrate, a variety of other sulfonates are utilized, with the best natural substrates being isethionate and taurocholate. The chain is Alpha-ketoglutarate-dependent sulfonate dioxygenase (JLP1) from Saccharomyces cerevisiae (strain ATCC 204508 / S288c) (Baker's yeast).